Consider the following 336-residue polypeptide: MAVKVGINGFGRIGRNVFRAAVKNPDIEVVAVNDLTANADGLAHLLKYDSVHGRLDAEVVVNDGVSVNGKEIIVKAERNPENLAWGEIGVDIVVESTGRFTKREDAAKHLEAGAKKVIISAPAKVENITVVMGVNQDKYDADAHHVISNASCTTICLAAFARVLHQIFGEVSRMMTTAHSYTNIQRILDAATHADLRGARAAAESIIDTTNGAAMAVALVLPELKGKLNGMAMRVATANVSVVDLVYELAKEVTVEEVNAALKAIAEGELKGILAYSIEPLVIRNYNGSTVSSTIDILSTMVIDGAMVKVVSWYDNETGYSHRVVALAAYINAKGL.

NAD(+)-binding positions include 12–13, Asp34, Arg78, and Ser120; that span reads RI. D-glyceraldehyde 3-phosphate contacts are provided by residues 151 to 153 and Thr182; that span reads SCT. The active-site Nucleophile is Cys152. Asn183 contributes to the NAD(+) binding site. Residues 211-212 and Arg234 contribute to the D-glyceraldehyde 3-phosphate site; that span reads NG. Asn316 contacts NAD(+).

Belongs to the glyceraldehyde-3-phosphate dehydrogenase family. Homotetramer.

It localises to the cytoplasm. It carries out the reaction D-glyceraldehyde 3-phosphate + phosphate + NAD(+) = (2R)-3-phospho-glyceroyl phosphate + NADH + H(+). Its pathway is carbohydrate degradation; glycolysis; pyruvate from D-glyceraldehyde 3-phosphate: step 1/5. Catalyzes the oxidative phosphorylation of glyceraldehyde 3-phosphate (G3P) to 1,3-bisphosphoglycerate (BPG) using the cofactor NAD. The first reaction step involves the formation of a hemiacetal intermediate between G3P and a cysteine residue, and this hemiacetal intermediate is then oxidized to a thioester, with concomitant reduction of NAD to NADH. The reduced NADH is then exchanged with the second NAD, and the thioester is attacked by a nucleophilic inorganic phosphate to produce BPG. This is Glyceraldehyde-3-phosphate dehydrogenase (gap) from Heyndrickxia coagulans (Weizmannia coagulans).